A 367-amino-acid chain; its full sequence is Protein trichome birefringence-like 39 (367 aa).

The chain crosses the membrane as a helical; Signal-anchor for type II membrane protein span at residues 7–29 (GNPSFLFFFFFFLCLSTVSAYIN). The GDS motif motif lies at 120 to 122 (GDS). A DCXHWCLPGXXDXWN motif motif is present at residues 343-357 (DCSHWCLPGLPDTWN).

Belongs to the PC-esterase family. TBL subfamily.

The protein resides in the membrane. May act as a bridging protein that binds pectin and other cell wall polysaccharides. Probably involved in maintaining esterification of pectins. May be involved in the specific O-acetylation of cell wall polymers. The polypeptide is Protein trichome birefringence-like 39 (TBL39) (Arabidopsis thaliana (Mouse-ear cress)).